Consider the following 305-residue polypeptide: tRNA uridine(34) hydroxylase (305 aa).

A Rhodanese domain is found at 136 to 230 (ADENTVVVDK…YLEEVPREQS (95 aa)). The Cysteine persulfide intermediate role is filled by cysteine 190.

It belongs to the TrhO family.

It catalyses the reaction uridine(34) in tRNA + AH2 + O2 = 5-hydroxyuridine(34) in tRNA + A + H2O. In terms of biological role, catalyzes oxygen-dependent 5-hydroxyuridine (ho5U) modification at position 34 in tRNAs. This is tRNA uridine(34) hydroxylase from Brucella melitensis biotype 1 (strain ATCC 23456 / CCUG 17765 / NCTC 10094 / 16M).